A 597-amino-acid chain; its full sequence is Gamma-terpinene synthase, chloroplastic (597 aa).

The transit peptide at Met-1–Ser-47 directs the protein to the chloroplast. Positions 350 and 354 each coordinate Mn(2+). Residues Asp-350–Asp-354 carry the DDXXD motif motif. Homodimerization stretches follow at residues Tyr-356 to Leu-362 and Glu-428 to Leu-464. The Mn(2+) site is built by Asp-494 and Glu-502.

It belongs to the terpene synthase family. In terms of assembly, homodimer. It depends on Mn(2+) as a cofactor. Mg(2+) is required as a cofactor.

It localises to the plastid. The protein localises to the chloroplast. The enzyme catalyses (2E)-geranyl diphosphate = gamma-terpinene + diphosphate. It functions in the pathway secondary metabolite biosynthesis; terpenoid biosynthesis. Its function is as follows. Involved in the biosynthesis of phenolic monoterpenes natural products thymol and carvacrol which have a broad range of biological activities acting as antimicrobial compounds, insecticides, antioxidants and pharmaceutical agents. Monoterpene synthase which catalyzes the conversion of geranyl diphosphate (GPP) to gamma-terpinene and minor amounts of other monoterpenes (e.g. alpha-thujene, alpha-terpinene, myrcene, sabinene, (+)-R-limonene, alpha-pinene and alpha-phellandrene). This Thymus caespititius (Cretan thyme) protein is Gamma-terpinene synthase, chloroplastic.